We begin with the raw amino-acid sequence, 178 residues long: ATP synthase subunit delta (178 aa).

Belongs to the ATPase delta chain family. As to quaternary structure, F-type ATPases have 2 components, F(1) - the catalytic core - and F(0) - the membrane proton channel. F(1) has five subunits: alpha(3), beta(3), gamma(1), delta(1), epsilon(1). F(0) has three main subunits: a(1), b(2) and c(10-14). The alpha and beta chains form an alternating ring which encloses part of the gamma chain. F(1) is attached to F(0) by a central stalk formed by the gamma and epsilon chains, while a peripheral stalk is formed by the delta and b chains.

The protein resides in the cell inner membrane. F(1)F(0) ATP synthase produces ATP from ADP in the presence of a proton or sodium gradient. F-type ATPases consist of two structural domains, F(1) containing the extramembraneous catalytic core and F(0) containing the membrane proton channel, linked together by a central stalk and a peripheral stalk. During catalysis, ATP synthesis in the catalytic domain of F(1) is coupled via a rotary mechanism of the central stalk subunits to proton translocation. In terms of biological role, this protein is part of the stalk that links CF(0) to CF(1). It either transmits conformational changes from CF(0) to CF(1) or is implicated in proton conduction. The polypeptide is ATP synthase subunit delta (Ectopseudomonas mendocina (strain ymp) (Pseudomonas mendocina)).